The chain runs to 190 residues: Potassium-transporting ATPase KdpC subunit (190 aa).

Residues 13 to 33 (VGFLLLTLVCGVIYPGVVTII) form a helical membrane-spanning segment.

The protein belongs to the KdpC family. The system is composed of three essential subunits: KdpA, KdpB and KdpC.

It localises to the cell membrane. In terms of biological role, part of the high-affinity ATP-driven potassium transport (or Kdp) system, which catalyzes the hydrolysis of ATP coupled with the electrogenic transport of potassium into the cytoplasm. This subunit acts as a catalytic chaperone that increases the ATP-binding affinity of the ATP-hydrolyzing subunit KdpB by the formation of a transient KdpB/KdpC/ATP ternary complex. The protein is Potassium-transporting ATPase KdpC subunit of Listeria innocua serovar 6a (strain ATCC BAA-680 / CLIP 11262).